The following is a 259-amino-acid chain: tRNA (guanine-N(7)-)-methyltransferase (259 aa).

Residues 1–11 show a composition bias toward basic and acidic residues; sequence MSNTDNSDKNT. Residues 1 to 29 form a disordered region; it reads MSNTDNSDKNTKPTGYRPPQTDFNTEFGN. 4 residues coordinate S-adenosyl-L-methionine: Glu-89, Glu-114, Asp-141, and Asp-164. Residue Asp-164 is part of the active site. Substrate contacts are provided by residues Lys-168, Asp-200, and 238-241; that span reads TKFE.

Belongs to the class I-like SAM-binding methyltransferase superfamily. TrmB family.

It catalyses the reaction guanosine(46) in tRNA + S-adenosyl-L-methionine = N(7)-methylguanosine(46) in tRNA + S-adenosyl-L-homocysteine. It participates in tRNA modification; N(7)-methylguanine-tRNA biosynthesis. Catalyzes the formation of N(7)-methylguanine at position 46 (m7G46) in tRNA. The protein is tRNA (guanine-N(7)-)-methyltransferase of Corynebacterium diphtheriae (strain ATCC 700971 / NCTC 13129 / Biotype gravis).